The sequence spans 249 residues: Serine acetyltransferase (249 aa).

The protein belongs to the transferase hexapeptide repeat family.

The protein localises to the cytoplasm. It catalyses the reaction L-serine + acetyl-CoA = O-acetyl-L-serine + CoA. It participates in amino-acid biosynthesis; L-cysteine biosynthesis; L-cysteine from L-serine: step 1/2. The protein is Serine acetyltransferase (cysE) of Synechocystis sp. (strain ATCC 27184 / PCC 6803 / Kazusa).